The following is a 714-amino-acid chain: Penicillin-binding protein 1F (714 aa).

Residues 1 to 12 (MFKIKKKKLFIP) lie on the Cytoplasmic side of the membrane. Residues 13–33 (IIILVLTAFLALIGYISIIFL) form a helical; Signal-anchor for type II membrane protein membrane-spanning segment. The Extracellular segment spans residues 34–714 (GHYVIDEKKL…DYVQPKLFSS (681 aa)). The tract at residues 49–217 (SKIVDQNGDE…STYSPILHPD (169 aa)) is transglycosylase. Residue Glu87 is the Proton donor; for transglycosylase activity of the active site. Residues 297–592 (SKLQKTAYQV…SSYPTRLFKD (296 aa)) form a transpeptidase region. Ser359 serves as the catalytic Acyl-ester intermediate; for transpeptidase activity.

The protein in the N-terminal section; belongs to the glycosyltransferase 51 family. It in the C-terminal section; belongs to the transpeptidase family.

The protein localises to the cell membrane. The catalysed reaction is [GlcNAc-(1-&gt;4)-Mur2Ac(oyl-L-Ala-gamma-D-Glu-L-Lys-D-Ala-D-Ala)](n)-di-trans,octa-cis-undecaprenyl diphosphate + beta-D-GlcNAc-(1-&gt;4)-Mur2Ac(oyl-L-Ala-gamma-D-Glu-L-Lys-D-Ala-D-Ala)-di-trans,octa-cis-undecaprenyl diphosphate = [GlcNAc-(1-&gt;4)-Mur2Ac(oyl-L-Ala-gamma-D-Glu-L-Lys-D-Ala-D-Ala)](n+1)-di-trans,octa-cis-undecaprenyl diphosphate + di-trans,octa-cis-undecaprenyl diphosphate + H(+). The enzyme catalyses Preferential cleavage: (Ac)2-L-Lys-D-Ala-|-D-Ala. Also transpeptidation of peptidyl-alanyl moieties that are N-acyl substituents of D-alanine.. Its pathway is cell wall biogenesis; peptidoglycan biosynthesis. Cell wall formation. May be involved in outgrowth of the germinated spore or it could function in the synthesis of the germ cell wall. This chain is Penicillin-binding protein 1F (pbpF), found in Bacillus subtilis (strain 168).